A 143-amino-acid polypeptide reads, in one-letter code: Hemoglobin subunit alpha-1 (143 aa).

S2 bears the N-acetylserine mark. Residues 2-143 enclose the Globin domain; it reads SLTEKDKAAV…VSLALAERYR (142 aa). O2 is bound at residue H60. H89 is a binding site for heme b.

The protein belongs to the globin family. Hb 1 is a heterotetramer of two alpha-1 and two beta chains. As to expression, red blood cells.

Functionally, involved in oxygen transport from gills to the various peripheral tissues. The protein is Hemoglobin subunit alpha-1 (hba1) of Cottoperca gobio (Frogmouth).